A 389-amino-acid chain; its full sequence is Acetyl-CoA decarbonylase/synthase complex subunit delta (389 aa).

The protein belongs to the CdhD family. In terms of assembly, heterodimer of delta and gamma chains. The ACDS complex is made up of alpha, epsilon, beta, gamma and delta chains with a probable stoichiometry of (alpha(2)epsilon(2))(4)-beta(8)-(gamma(1)delta(1))(8).

Part of a complex that catalyzes the reversible cleavage of acetyl-CoA, allowing autotrophic growth from CO(2). Probably maintains the overall quaternary structure of the ACDS complex. This is Acetyl-CoA decarbonylase/synthase complex subunit delta from Methanothermobacter thermautotrophicus (strain ATCC 29096 / DSM 1053 / JCM 10044 / NBRC 100330 / Delta H) (Methanobacterium thermoautotrophicum).